The primary structure comprises 256 residues: DNA polymerase sliding clamp 2 (256 aa).

This sequence belongs to the PCNA family. In terms of assembly, homotrimer. The subunits circularize to form a toroid; DNA passes through its center. Replication factor C (RFC) is required to load the toroid on the DNA.

Its function is as follows. Sliding clamp subunit that acts as a moving platform for DNA processing. Responsible for tethering the catalytic subunit of DNA polymerase and other proteins to DNA during high-speed replication. The polypeptide is DNA polymerase sliding clamp 2 (Pyrobaculum aerophilum (strain ATCC 51768 / DSM 7523 / JCM 9630 / CIP 104966 / NBRC 100827 / IM2)).